The chain runs to 127 residues: Aspartate 1-decarboxylase (127 aa).

The active-site Schiff-base intermediate with substrate; via pyruvic acid is the S25. S25 bears the Pyruvic acid (Ser) mark. Residue T57 coordinates substrate. Y58 acts as the Proton donor in catalysis. Residue 73–75 (GAA) coordinates substrate.

The protein belongs to the PanD family. Heterooctamer of four alpha and four beta subunits. Requires pyruvate as cofactor. Is synthesized initially as an inactive proenzyme, which is activated by self-cleavage at a specific serine bond to produce a beta-subunit with a hydroxyl group at its C-terminus and an alpha-subunit with a pyruvoyl group at its N-terminus.

It localises to the cytoplasm. The catalysed reaction is L-aspartate + H(+) = beta-alanine + CO2. The protein operates within cofactor biosynthesis; (R)-pantothenate biosynthesis; beta-alanine from L-aspartate: step 1/1. Its function is as follows. Catalyzes the pyruvoyl-dependent decarboxylation of aspartate to produce beta-alanine. In Bacillus cereus (strain 03BB102), this protein is Aspartate 1-decarboxylase.